A 242-amino-acid chain; its full sequence is Type III pantothenate kinase (242 aa).

An ATP-binding site is contributed by 7–14; that stretch reads DLGNSRFK. Substrate is bound by residues tyrosine 91 and 98–101; that span reads GVDR. Aspartate 100 functions as the Proton acceptor in the catalytic mechanism. An ATP-binding site is contributed by threonine 121. Threonine 171 serves as a coordination point for substrate.

The protein belongs to the type III pantothenate kinase family. In terms of assembly, homodimer. The cofactor is NH4(+). K(+) is required as a cofactor.

It localises to the cytoplasm. It catalyses the reaction (R)-pantothenate + ATP = (R)-4'-phosphopantothenate + ADP + H(+). Its pathway is cofactor biosynthesis; coenzyme A biosynthesis; CoA from (R)-pantothenate: step 1/5. Functionally, catalyzes the phosphorylation of pantothenate (Pan), the first step in CoA biosynthesis. This chain is Type III pantothenate kinase, found in Xylella fastidiosa (strain 9a5c).